We begin with the raw amino-acid sequence, 347 residues long: Beta-hexosaminidase (347 aa).

Substrate contacts are provided by residues D64, R72, R138, and 168–169 (KH). Catalysis depends on H181, which acts as the Proton donor/acceptor. The Nucleophile role is filled by D251.

This sequence belongs to the glycosyl hydrolase 3 family. NagZ subfamily.

It localises to the cytoplasm. The enzyme catalyses Hydrolysis of terminal non-reducing N-acetyl-D-hexosamine residues in N-acetyl-beta-D-hexosaminides.. Its pathway is cell wall biogenesis; peptidoglycan recycling. Plays a role in peptidoglycan recycling by cleaving the terminal beta-1,4-linked N-acetylglucosamine (GlcNAc) from peptide-linked peptidoglycan fragments, giving rise to free GlcNAc, anhydro-N-acetylmuramic acid and anhydro-N-acetylmuramic acid-linked peptides. In Thioalkalivibrio sulfidiphilus (strain HL-EbGR7), this protein is Beta-hexosaminidase.